The primary structure comprises 1837 residues: MAQQQQQQQHHHHLQHQQQQQQQQQLQHHSNLLLLQQQQQQQQQQQQQQQQLLQQEQQLQQYDNNLYSQNYNMEEYERRRRREREKYERQQGIQSDDRETSLFSEPRRLTEGDAEITAALGEFGDARNYINQYTVGISRHAPGGGSGNGSIGNNPRLQAPMIQQQVSSSISSSASVASSLLPPGLGQTQQQQQQQQQQQQPRPPTYLKQADNKPPYNGRGGYPGQPMKNDIPSSSGMAPPRGPPKLNSNSSSITNNAAASSSSSLLGPPISTQVPNGREKSFLGPPTTGTALHNGGGRFAQPVSNKRPGVGIQPPPPQEKDVRSMLSEMKNHFQVTPLNPIAATPQAPTRENYNLNAPNKFKYAFDIVDPIMPLLNSPPSVTPSSLITPIAPMTSPIAPLLTTPPQASQLPLGSGSGNGAAISATSLSTTTAAAAAAAAVAGVAATVAATVAPIQQLPPTPPKAMSVTPPTAKPLKIEKNPILEKQDSCLENDLELSESEDERKKDGRSPGSSSNGSESDSTESGSESSSKGEHNHHHHHQQQQQQTQQQQLHGHHPQSHHHQQFLQQQLQRQQQQQQQQQQLTANGGKKKYSQTIIASGANTITGLLTSSGGLGSSSGNNSSGGGGGSGNGGTTSSSSGGSMGGSGGSSSSGGASGGGGGGGGSGSSSGIGSGSSSNKTPSPTDSNKWNLSRFFHKPTSQTSSESVSPGNVSMKVPGILPGGAQIIPESIDVTTAIVKNEKIHHDDHLMDIDECDEDDDDVDEQHQQLRYGAGLSVTPVAVKKEEDLGLLTAAAIPKSQIKRESETQISHQRLSESATSGSSSSSCSSSDSAASASEVVPMPGPGETLQIPGVPAAITSVMRVPPINNMQKSQSMSVTVTPIAPLPASPKPRQKKPRKKKMMSVLTPPLLDSSDEDEPSTKHSSLVVAQAQAAVVPPPSTNSTTTSATTTKKGRGRPRKQQQQQSAGSGNLSSASAGSSSQAKGPTLTAAKKTLVKASASSSTSNTNSSSVLPRKREHSSQSSSNGNTPTKKMSSIPMMPAAAASAAATLLQPPAVAAANAVAASSSSSDEESSSSSCSTSKSSSSSSSSDDTETQKTNCRIVKLNKTVPVTAAMAPLAKRSSYHRRSGSSSPTSSSSETDKPNSNSHNNLGIAAISNSNSNSNNNVIVNNNLQQQAMPQQSPYKVPLSGGSQQLSSSDSSSSSSGSSSSSGDEDDAKREKNRERKPKSDKNKISTLTRIFNNKEGGAKKQGQVVIIDQSEEQLQQQQQQQQQVQIRDPLPPPSLLSQSGGVKQRMTPTQQQQLGAGLASPARTTTPLLTSLICKIDLSKLSRERILRLKKLAPSSSNQQNGHLTPNGHVVQGGSSPAGLSKVKHEHHQLHHHSQQAHSHPVKPEPELDSLYETKFRPTNVKQEFQLKQERDRDRNRERDQQQQPPPRRRKRSSSSSSSPYKEKKRKKEKTDPMLTNAKDQMLQINPMLLPSNNHERLSYDKYQLLQEDAAAAAAAAAAVAVVNSSNGQKLFQSSIGGGTGATAVGPLSIMAPSTCSEAVQTTPPTSVTGAGAPASLVSQPPPPPRLIYRSYFDREEEHPSDDLRKSKQFLQEAVQRKHAADSERDSFNQVTLYLEAVAYFLLTADAMERCSSETATWTMYKDTLSLIKFISSKFRPYQQSANCQQETHNKVAILSLRCQSLISLKLFKLRRVNCRAIINSLTDFFRNGRGDIVNGNTPSSISPSNSVGSQGSGSNTPPGKIVPQDIHNQLCKQNEYLTYVNSAHELWDQADRLVRTGNHLDFFRELDHENGPLTLHSTMHEVFRYVQAGLKTLRDAVSHPTHQSQ.

9 disordered regions span residues 1–25 (MAQQ…QQQQ), 65–109 (NLYS…PRRL), 162–295 (IQQQ…LHNG), 455–592 (QQLP…KKKY), 605–712 (TGLL…PGNV), 797–852 (PKSQ…LQIP), 868–1250 (NNMQ…GGAK), 1267–1311 (QQQQ…GLAS), and 1344–1466 (APSS…DPML). Residues 16 to 25 (HQQQQQQQQQ) are compositionally biased toward low complexity. Over residues 84-109 (REKYERQQGIQSDDRETSLFSEPRRL) the composition is skewed to basic and acidic residues. Low complexity-rich tracts occupy residues 162–179 (IQQQ…VASS), 187–200 (QTQQ…QQQQ), and 247–264 (NSNS…SSSS). T468 is subject to Phosphothreonine. The segment covering 475 to 488 (LKIEKNPILEKQDS) has biased composition (basic and acidic residues). Residues 490–500 (LENDLELSESE) are compositionally biased toward acidic residues. A phosphoserine mark is found at S497 and S499. Composition is skewed to low complexity over residues 509-529 (SPGS…SESS) and 542-552 (QQQQQTQQQQL). Basic residues predominate over residues 553–563 (HGHHPQSHHHQ). Residues 564-583 (QFLQQQLQRQQQQQQQQQQL) are compositionally biased toward low complexity. Gly residues-rich tracts occupy residues 612–633 (GGLG…GNGG) and 641–673 (GSMG…GIGS). 2 stretches are compositionally biased toward polar residues: residues 678–690 (NKTP…NKWN) and 698–711 (PTSQ…SPGN). Residues 815–837 (SESATSGSSSSSCSSSDSAASAS) are compositionally biased toward low complexity. Over residues 868 to 880 (NNMQKSQSMSVTV) the composition is skewed to polar residues. A compositionally biased stretch (basic residues) spans 892–902 (PRQKKPRKKKM). Phosphoserine occurs at positions 913 and 914. Low complexity-rich tracts occupy residues 927 to 951 (VVAQ…ATTT) and 961 to 1013 (QQQQ…SSVL). A DNA-binding region (a.T hook) is located at residues 952-964 (KKGRGRPRKQQQQ). Residues S974 and S976 each carry the phosphoserine modification. Residues 1021 to 1033 (SQSSSNGNTPTKK) show a composition bias toward polar residues. Composition is skewed to low complexity over residues 1034–1049 (MSSI…SAAA), 1056–1091 (AVAA…SSSS), 1130–1139 (GSSSPTSSSS), and 1157–1173 (ISNS…VNNN). Polar residues predominate over residues 1174 to 1184 (LQQQAMPQQSP). The span at 1189 to 1212 (LSGGSQQLSSSDSSSSSSGSSSSS) shows a compositional bias: low complexity. A compositionally biased stretch (basic and acidic residues) spans 1217 to 1234 (DAKREKNRERKPKSDKNK). A compositionally biased stretch (low complexity) spans 1267 to 1276 (QQQQQQQQVQ). A compositionally biased stretch (polar residues) spans 1345 to 1355 (PSSSNQQNGHL). Positions 1373-1386 (KVKHEHHQLHHHSQ) are enriched in basic residues. Basic and acidic residues-rich tracts occupy residues 1393 to 1407 (VKPE…ETKF) and 1416 to 1432 (FQLK…ERDQ). S1517 carries the phosphoserine modification. The segment covering 1550-1560 (AVQTTPPTSVT) has biased composition (polar residues). Disordered stretches follow at residues 1550 to 1571 (AVQT…LVSQ) and 1727 to 1756 (GNTP…IVPQ). Residues 1727–1747 (GNTPSSISPSNSVGSQGSGSN) show a composition bias toward low complexity.

This sequence belongs to the AF4 family.

The protein resides in the nucleus. Its function is as follows. Has a role in transcriptional regulation. Acts in parallel with the Ras/MAPK and the PI3K/PKB pathways in the control of cell identity and cellular growth. Essential for regulation of the cytoskeleton and cell growth but not for cell proliferation or growth rate. Required specifically for the microtubule-based basal transport of lipid droplets. Plays a partially redundant function downstream of Raf in cell fate specification in the developing eye. Pair-rule protein that regulates embryonic cellularization, gastrulation and segmentation. The sequence is that of AF4/FMR2 family member lilli from Drosophila willistoni (Fruit fly).